A 235-amino-acid chain; its full sequence is Thiamine import ATP-binding protein ThiQ (235 aa).

Residues 2-230 (LKLIDITWLY…QASASALLGI (229 aa)) enclose the ABC transporter domain. An ATP-binding site is contributed by 32–39 (GPSGAGKS).

It belongs to the ABC transporter superfamily. Thiamine importer (TC 3.A.1.19.1) family. The complex is composed of two ATP-binding proteins (ThiQ), two transmembrane proteins (ThiP) and a solute-binding protein (ThiB).

The protein localises to the cell inner membrane. It carries out the reaction thiamine(out) + ATP + H2O = thiamine(in) + ADP + phosphate + H(+). Part of the ABC transporter complex ThiBPQ involved in thiamine import. Responsible for energy coupling to the transport system. The sequence is that of Thiamine import ATP-binding protein ThiQ from Salmonella choleraesuis (strain SC-B67).